The following is a 706-amino-acid chain: Termination factor NPH-I homolog (706 aa).

A Helicase ATP-binding domain is found at 62-227; the sequence is IGQGENTRGL…VPCFNMLSGR (166 aa). 75–82 is an ATP binding site; sequence HQMGMGKT. The DEAH box motif lies at 168–171; that stretch reads DEAH. Positions 417–599 constitute a Helicase C-terminal domain; that stretch reads QCLQPLKVLE…HLNSAFRDLL (183 aa).

The protein belongs to the DEAD box helicase family. DEAH subfamily. In terms of assembly, part of the viral DNA-directed RNA polymerase that consists of 8 polII-like subunits (RPB1, RPB2, RPB3, RPB5, RPB6, RPB7, RPB9, RPB10), a capping enzyme and a termination factor.

It localises to the virion. Its function is as follows. Putative DNA-dependent ATPase required for providing the needed energy to achieve the termination of early transcripts. In Ornithodoros (relapsing fever ticks), this protein is Termination factor NPH-I homolog.